Consider the following 117-residue polypeptide: Non-specific lipid-transfer protein Lac s 1 (117 aa).

An N-terminal signal peptide occupies residues 1-25 (MARMAMMILCVVLTCMVVATPYTEA). 4 cysteine pairs are disulfide-bonded: cysteine 29-cysteine 76, cysteine 39-cysteine 53, cysteine 54-cysteine 99, and cysteine 74-cysteine 113.

The protein belongs to the plant LTP family.

In terms of biological role, plant non-specific lipid-transfer proteins transfer phospholipids as well as galactolipids across membranes. May play a role in wax or cutin deposition in the cell walls of expanding epidermal cells and certain secretory tissues. This chain is Non-specific lipid-transfer protein Lac s 1, found in Lactuca sativa (Garden lettuce).